We begin with the raw amino-acid sequence, 190 residues long: Protein A52 (190 aa).

This sequence belongs to the orthopoxvirus A52R protein family. In terms of assembly, interacts with host TRAF6 and IRAK2.

In terms of biological role, bcl-2-like protein which targets host toll-like receptor signaling complexes to suppress innate immune response. Interacts with host TRAF6 to activate p38 and subsequently induce the expression of several cytokines such as IL-10. Also associates with host IRAK2 to inhibit NF-kappa-B signaling. This chain is Protein A52, found in Homo sapiens (Human).